Here is a 37-residue protein sequence, read N- to C-terminus: Large ribosomal subunit protein bL36A (37 aa).

This sequence belongs to the bacterial ribosomal protein bL36 family.

In Methylobacillus flagellatus (strain ATCC 51484 / DSM 6875 / VKM B-1610 / KT), this protein is Large ribosomal subunit protein bL36A.